A 245-amino-acid chain; its full sequence is 3-deoxy-manno-octulosonate cytidylyltransferase (245 aa).

The protein belongs to the KdsB family.

Its subcellular location is the cytoplasm. The enzyme catalyses 3-deoxy-alpha-D-manno-oct-2-ulosonate + CTP = CMP-3-deoxy-beta-D-manno-octulosonate + diphosphate. The protein operates within nucleotide-sugar biosynthesis; CMP-3-deoxy-D-manno-octulosonate biosynthesis; CMP-3-deoxy-D-manno-octulosonate from 3-deoxy-D-manno-octulosonate and CTP: step 1/1. It functions in the pathway bacterial outer membrane biogenesis; lipopolysaccharide biosynthesis. Functionally, activates KDO (a required 8-carbon sugar) for incorporation into bacterial lipopolysaccharide in Gram-negative bacteria. The chain is 3-deoxy-manno-octulosonate cytidylyltransferase from Desulfatibacillum aliphaticivorans.